A 129-amino-acid chain; its full sequence is NADPH-dependent 7-cyano-7-deazaguanine reductase (129 aa).

Cys34 serves as the catalytic Thioimide intermediate. Asp41 (proton donor) is an active-site residue. Substrate contacts are provided by residues 56 to 58 and 75 to 76; these read VEL and HE.

It belongs to the GTP cyclohydrolase I family. QueF type 1 subfamily.

It is found in the cytoplasm. It catalyses the reaction 7-aminomethyl-7-carbaguanine + 2 NADP(+) = 7-cyano-7-deazaguanine + 2 NADPH + 3 H(+). It participates in tRNA modification; tRNA-queuosine biosynthesis. Functionally, catalyzes the NADPH-dependent reduction of 7-cyano-7-deazaguanine (preQ0) to 7-aminomethyl-7-deazaguanine (preQ1). This Thioalkalivibrio sulfidiphilus (strain HL-EbGR7) protein is NADPH-dependent 7-cyano-7-deazaguanine reductase.